A 406-amino-acid chain; its full sequence is 3-isopropylmalate dehydrogenase, chloroplastic (406 aa).

The transit peptide at Met-1–Cys-34 directs the protein to the chloroplast. Ser-71 carries the phosphoserine modification. Position 117–130 (Gly-117–Glu-130) interacts with NAD(+). Positions 137, 147, 175, and 265 each coordinate substrate. Positions 265, 289, and 293 each coordinate Mg(2+). Gly-323–Asn-335 lines the NAD(+) pocket.

The protein belongs to the isocitrate and isopropylmalate dehydrogenases family. In terms of assembly, homodimer. It depends on Mg(2+) as a cofactor. Mn(2+) is required as a cofactor.

The protein localises to the plastid. It localises to the chloroplast. It catalyses the reaction (2R,3S)-3-isopropylmalate + NAD(+) = 4-methyl-2-oxopentanoate + CO2 + NADH. It participates in amino-acid biosynthesis; L-leucine biosynthesis; L-leucine from 3-methyl-2-oxobutanoate: step 3/4. Catalyzes the oxidation of 3-carboxy-2-hydroxy-4-methylpentanoate (3-isopropylmalate) to 3-carboxy-4-methyl-2-oxopentanoate. The product decarboxylates to 4-methyl-2 oxopentanoate. The chain is 3-isopropylmalate dehydrogenase, chloroplastic from Brassica napus (Rape).